Here is a 1059-residue protein sequence, read N- to C-terminus: Disks large-associated protein 2 (1059 aa).

2 disordered regions span residues 31-54 (GEPEEEEGGDLAQPGLSFPGPAEE) and 245-311 (KSHS…SDST). The segment covering 245-261 (KSHSLEGSSKSNINGTK) has biased composition (polar residues). Positions 262–271 (SDSRVDDHHQ) are enriched in basic and acidic residues. A compositionally biased stretch (basic residues) spans 272-285 (SHLSKHSKRSKSKE). Phosphoserine occurs at positions 302, 308, 390, and 456. A disordered region spans residues 613-669 (YKKTPPPVPPRTTSKPLISVTAQSSTESTQDAYQDSRAQRMSPWPQDSRGGLYNSMD). Residues 632 to 645 (VTAQSSTESTQDAY) show a composition bias toward polar residues. Residues Ser-667, Ser-670, Ser-673, and Ser-720 each carry the phosphoserine modification. The interval 723–756 (VQDSEFPDHQPYPRSDVETATDSDTESRGLREYH) is disordered. The residue at position 743 (Thr-743) is a Phosphothreonine. Ser-745 is subject to Phosphoserine. Over residues 747 to 756 (TESRGLREYH) the composition is skewed to basic and acidic residues. Phosphoserine is present on residues Ser-776, Ser-811, Ser-983, and Ser-1012. Residues 985-1025 (ERKEERKIPPPIPKKPPKGKFPITREKSLDLPDRQRQEARR) form a disordered region. A compositionally biased stretch (basic and acidic residues) spans 1007–1025 (ITREKSLDLPDRQRQEARR).

The protein belongs to the SAPAP family. As to quaternary structure, interacts with DLG4/PSD-95. As to expression, expressed in various brain areas.

It localises to the cell membrane. It is found in the postsynaptic density. Its subcellular location is the synapse. May play a role in the molecular organization of synapses and neuronal cell signaling. Could be an adapter protein linking ion channel to the subsynaptic cytoskeleton. May induce enrichment of PSD-95/SAP90 at the plasma membrane. The polypeptide is Disks large-associated protein 2 (Mus musculus (Mouse)).